Here is a 321-residue protein sequence, read N- to C-terminus: Coproporphyrin III ferrochelatase (321 aa).

The Fe(2+) site is built by His-185 and Glu-267.

The protein belongs to the ferrochelatase family.

The protein localises to the cytoplasm. It carries out the reaction Fe-coproporphyrin III + 2 H(+) = coproporphyrin III + Fe(2+). Its pathway is porphyrin-containing compound metabolism; protoheme biosynthesis. In terms of biological role, involved in coproporphyrin-dependent heme b biosynthesis. Catalyzes the insertion of ferrous iron into coproporphyrin III to form Fe-coproporphyrin III. The protein is Coproporphyrin III ferrochelatase of Lacticaseibacillus paracasei (strain ATCC 334 / BCRC 17002 / CCUG 31169 / CIP 107868 / KCTC 3260 / NRRL B-441) (Lactobacillus paracasei).